Reading from the N-terminus, the 540-residue chain is MTLNSLPVWPALQAHYEEIRDAHLRDWFAPANDRAPTRAERFTFEGGGLAADFSKNRLTDATLALLVRLAREAGVEARRDAMFAGETVNPTEGRAALHTALRANAADAPFQAQVAAERAKMARFADAVRSGAWTGYTGKRIRHVVNIGIGGSDLGPKMVVHALHHVATPDIATHFVSNVDGADLARVLERIDPEETLAIIVSKTFTTLETMTNARSLRDWFVANGCPEGALAKHFVGVSANPAEVVKFGIAEANVFEMWDWVGGRYSLWSAVGLSIMIAIGPERFDELLAGARDMDEHFRTAPLERNLPALQGLVGIWYRNFFGAQSYLVAPYSEALHYLPSYLQQLEMESNGKSARIDGAFVDYPTSAVTWGEPGTNGQHAFFQMLHQGPTLVPIDFIAVLTPEHPLASHHPKLLANCFAQSEALMLGRTLDEARKIAGPAKPELAPHLTFPGNRPTTTLLVDALTPRTLGALIALYEHKVLVQAAVWNINPFDQWGVELGKILGKVVEADLTAAQVDPAKHDSSTSALIARARKALGE.

The Proton donor role is filled by E350. Catalysis depends on residues H381 and K503.

The protein belongs to the GPI family.

It localises to the cytoplasm. The catalysed reaction is alpha-D-glucose 6-phosphate = beta-D-fructose 6-phosphate. Its pathway is carbohydrate biosynthesis; gluconeogenesis. It functions in the pathway carbohydrate degradation; glycolysis; D-glyceraldehyde 3-phosphate and glycerone phosphate from D-glucose: step 2/4. In terms of biological role, catalyzes the reversible isomerization of glucose-6-phosphate to fructose-6-phosphate. The chain is Glucose-6-phosphate isomerase from Burkholderia pseudomallei (strain 668).